Here is a 209-residue protein sequence, read N- to C-terminus: FMN-dependent NADH:quinone oxidoreductase (209 aa).

Residues Ser9 and 15-17 each bind FMN; that span reads SNS.

It belongs to the azoreductase type 1 family. Homodimer. Requires FMN as cofactor.

It catalyses the reaction 2 a quinone + NADH + H(+) = 2 a 1,4-benzosemiquinone + NAD(+). The enzyme catalyses N,N-dimethyl-1,4-phenylenediamine + anthranilate + 2 NAD(+) = 2-(4-dimethylaminophenyl)diazenylbenzoate + 2 NADH + 2 H(+). Its function is as follows. Quinone reductase that provides resistance to thiol-specific stress caused by electrophilic quinones. Functionally, also exhibits azoreductase activity. Catalyzes the reductive cleavage of the azo bond in aromatic azo compounds to the corresponding amines. This Bordetella bronchiseptica (strain ATCC BAA-588 / NCTC 13252 / RB50) (Alcaligenes bronchisepticus) protein is FMN-dependent NADH:quinone oxidoreductase.